A 74-amino-acid polypeptide reads, in one-letter code: Small ribosomal subunit protein eS28 (74 aa).

This sequence belongs to the eukaryotic ribosomal protein eS28 family.

In Halobacterium salinarum (strain ATCC 29341 / DSM 671 / R1), this protein is Small ribosomal subunit protein eS28.